A 393-amino-acid chain; its full sequence is Matrix metalloproteinase-23 (393 aa).

The Cytoplasmic portion of the chain corresponds to 1 to 20 (MGRGACVPSAASGAGDRARQ). Residues 1 to 81 (MGRGACVPSA…PHPPVPRRRR (81 aa)) constitute a propeptide that is removed on maturation. Residues 21–41 (LGAVLGALCLFPALVLLAWPG) form a helical; Signal-anchor for type II membrane protein membrane-spanning segment. Residues 42-393 (TPANGAGARV…TYSWRIRVRS (352 aa)) are Lumenal-facing. The segment at 60–79 (TSGVLASGSLGPPHPPVPRR) is disordered. Asparagine 95 and asparagine 151 each carry an N-linked (GlcNAc...) asparagine glycan. Histidine 214 provides a ligand contact to Zn(2+). Glutamate 215 is a catalytic residue. Zn(2+) is bound by residues histidine 218 and histidine 224. N-linked (GlcNAc...) asparagine glycosylation occurs at asparagine 235. The ShKT domain occupies 258-292 (CLDRLFVCASWARRGFCDTRRRLMKRLCPSSCDFC). Cystine bridges form between cysteine 258–cysteine 292, cysteine 265–cysteine 285, and cysteine 274–cysteine 289. One can recognise an Ig-like C2-type domain in the interval 298–383 (PTVAATPPPP…VVRRRQRVLS (86 aa)). Asparagine 319 carries N-linked (GlcNAc...) asparagine glycosylation. An intrachain disulfide couples cysteine 324 to cysteine 373.

Belongs to the peptidase M10A family. Requires Zn(2+) as cofactor. N-glycosylated. Post-translationally, proteolytic cleavage might yield an active form.

The protein localises to the membrane. The protein resides in the endoplasmic reticulum membrane. Protease. May regulate the surface expression of some potassium channels by retaining them in the endoplasmic reticulum. The chain is Matrix metalloproteinase-23 (MMP23) from Bos taurus (Bovine).